The sequence spans 1535 residues: Protein artichoke (1535 aa).

The first 19 residues, M1–A19, serve as a signal peptide directing secretion. LRR repeat units follow at residues K64–S87, Q89–E110, E112–G135, M136–G157, L158–H181, P183–G206, L207–R230, L231–D256, L257–D280, L281–R304, P306–Q328, G331–A356, L357–G380, G382–A404, P406–L429, P430–G452, L453–H476, P478–H500, L521–D545, L548–G571, M573–G595, Q597–P619, L620–N643, S645–T667, R669–L691, N692–G714, R716–N738, L739–G762, D764–E786, P788–N810, A811–S834, M835–A858, N860–T882, and M883–N906. Residues N919–V963 enclose the LRRCT domain. Disordered regions lie at residues H1036–I1055, T1253–Y1331, V1377–T1416, and A1429–A1449. A compositionally biased stretch (polar residues) spans T1253–A1270. Composition is skewed to low complexity over residues T1271–T1285 and T1293–T1315. 2 stretches are compositionally biased toward polar residues: residues P1316 to D1328 and V1377 to T1391. The span at T1398–P1407 shows a compositional bias: pro residues.

The protein localises to the secreted. It is found in the extracellular space. It localises to the extracellular matrix. Its subcellular location is the cytoplasm. Functionally, required for normal morphology and function of ciliated sensory organs. This is Protein artichoke from Drosophila melanogaster (Fruit fly).